The primary structure comprises 346 residues: UPF0421 protein OB2406 (346 aa).

Helical transmembrane passes span 16 to 36, 55 to 75, 102 to 122, and 128 to 148; these read IAVL…VFAV, LIRF…IALF, LLVA…NYVM, and LFTT…LLPP.

The protein belongs to the UPF0421 family.

It localises to the cell membrane. The polypeptide is UPF0421 protein OB2406 (Oceanobacillus iheyensis (strain DSM 14371 / CIP 107618 / JCM 11309 / KCTC 3954 / HTE831)).